We begin with the raw amino-acid sequence, 255 residues long: 3-deoxy-manno-octulosonate cytidylyltransferase (255 aa).

It belongs to the KdsB family.

Its subcellular location is the cytoplasm. It carries out the reaction 3-deoxy-alpha-D-manno-oct-2-ulosonate + CTP = CMP-3-deoxy-beta-D-manno-octulosonate + diphosphate. It participates in nucleotide-sugar biosynthesis; CMP-3-deoxy-D-manno-octulosonate biosynthesis; CMP-3-deoxy-D-manno-octulosonate from 3-deoxy-D-manno-octulosonate and CTP: step 1/1. It functions in the pathway bacterial outer membrane biogenesis; lipopolysaccharide biosynthesis. Its function is as follows. Activates KDO (a required 8-carbon sugar) for incorporation into bacterial lipopolysaccharide in Gram-negative bacteria. This is 3-deoxy-manno-octulosonate cytidylyltransferase from Thermodesulfovibrio yellowstonii (strain ATCC 51303 / DSM 11347 / YP87).